The sequence spans 91 residues: Probable Fe(2+)-trafficking protein (91 aa).

The protein belongs to the Fe(2+)-trafficking protein family.

Functionally, could be a mediator in iron transactions between iron acquisition and iron-requiring processes, such as synthesis and/or repair of Fe-S clusters in biosynthetic enzymes. The sequence is that of Probable Fe(2+)-trafficking protein from Paraburkholderia phymatum (strain DSM 17167 / CIP 108236 / LMG 21445 / STM815) (Burkholderia phymatum).